A 513-amino-acid polypeptide reads, in one-letter code: 2-isopropylmalate synthase (513 aa).

One can recognise a Pyruvate carboxyltransferase domain in the interval 5–268 (LIIFDTTLRD…DVGIDTTQIV (264 aa)). Residues Asp-14, His-202, His-204, and Asn-239 each contribute to the Mn(2+) site. A regulatory domain region spans residues 394 to 513 (RFISLSQRSE…KAVQKINPQI (120 aa)).

The protein belongs to the alpha-IPM synthase/homocitrate synthase family. LeuA type 1 subfamily. In terms of assembly, homodimer. Requires Mn(2+) as cofactor.

The protein resides in the cytoplasm. The enzyme catalyses 3-methyl-2-oxobutanoate + acetyl-CoA + H2O = (2S)-2-isopropylmalate + CoA + H(+). It participates in amino-acid biosynthesis; L-leucine biosynthesis; L-leucine from 3-methyl-2-oxobutanoate: step 1/4. Catalyzes the condensation of the acetyl group of acetyl-CoA with 3-methyl-2-oxobutanoate (2-ketoisovalerate) to form 3-carboxy-3-hydroxy-4-methylpentanoate (2-isopropylmalate). The sequence is that of 2-isopropylmalate synthase from Cupriavidus metallidurans (strain ATCC 43123 / DSM 2839 / NBRC 102507 / CH34) (Ralstonia metallidurans).